A 67-amino-acid chain; its full sequence is Large ribosomal subunit protein bL35 (67 aa).

The protein belongs to the bacterial ribosomal protein bL35 family.

The chain is Large ribosomal subunit protein bL35 from Rhizobium johnstonii (strain DSM 114642 / LMG 32736 / 3841) (Rhizobium leguminosarum bv. viciae).